Consider the following 334-residue polypeptide: ATP-dependent kinase YFH7 (334 aa).

30-38 is an ATP binding site; it reads GHPGSGKST.

The protein belongs to the YFH7 family.

Its function is as follows. ATP-dependent kinase that could be involved in endoplasmic reticulum membrane assembly. In Eremothecium gossypii (strain ATCC 10895 / CBS 109.51 / FGSC 9923 / NRRL Y-1056) (Yeast), this protein is ATP-dependent kinase YFH7 (YFH7).